The following is a 502-amino-acid chain: Intracellular exo-alpha-(1-&gt;5)-L-arabinofuranosidase (502 aa).

Alpha-L-arabinofuranose is bound by residues E29, N74, and N174. E175 acts as the Proton donor/acceptor in catalysis. Alpha-L-arabinofuranose contacts are provided by Y246, E294, and Q351. The active-site Nucleophile is the E294.

This sequence belongs to the glycosyl hydrolase 51 family. In terms of assembly, homohexamer; trimer of dimers.

Its subcellular location is the cytoplasm. It catalyses the reaction Hydrolysis of terminal non-reducing alpha-L-arabinofuranoside residues in alpha-L-arabinosides.. It functions in the pathway glycan metabolism; L-arabinan degradation. Strongly inhibited by Hg(2+). Involved in the degradation of arabinan and is a key enzyme in the complete degradation of the plant cell wall. Catalyzes the cleavage of terminal alpha-(1-&gt;5)-arabinofuranosyl bonds in different hemicellulosic homopolysaccharides (branched and debranched arabinans). It acts preferentially on aryl-alpha-L-arabinofuranosides, and is much less effective on aryl-beta-D-xylopyranosides. This Geobacillus stearothermophilus (Bacillus stearothermophilus) protein is Intracellular exo-alpha-(1-&gt;5)-L-arabinofuranosidase (abfA).